The chain runs to 746 residues: Protein O-mannosyl-transferase 1 (746 aa).

7 helical membrane passes run 30–50 (PLVV…LGLL), 90–110 (FGHM…NFLW), 121–141 (VPIW…VPMA), 144–164 (IVLE…LMLI), 176–196 (LLES…LKFF), 228–248 (MGIF…WNLI), and 266–286 (IVAL…VHLM). 3 consecutive MIR domains span residues 318–381 (PLEV…VKDP), 392–449 (PRPV…LDIV), and 453–513 (SNRD…VEEH). N-linked (GlcNAc...) asparagine glycosylation is found at Asn435, Asn471, and Asn539. Transmembrane regions (helical) follow at residues 597-617 (IVIW…FFWY), 636-656 (WVLA…PFFL), and 660-680 (VLFL…LPIV).

Belongs to the glycosyltransferase 39 family.

Its subcellular location is the endoplasmic reticulum membrane. It catalyses the reaction a di-trans,poly-cis-dolichyl beta-D-mannosyl phosphate + L-seryl-[protein] = 3-O-(alpha-D-mannosyl)-L-seryl-[protein] + a di-trans,poly-cis-dolichyl phosphate + H(+). The catalysed reaction is a di-trans,poly-cis-dolichyl beta-D-mannosyl phosphate + L-threonyl-[protein] = 3-O-(alpha-D-mannosyl)-L-threonyl-[protein] + a di-trans,poly-cis-dolichyl phosphate + H(+). The protein operates within protein modification; protein glycosylation. Functionally, transfers mannosyl residues to the hydroxyl group of serine or threonine residues. Coexpression of both POMT1 and POMT2 is necessary for enzyme activity, expression of either POMT1 or POMT2 alone is insufficient. Essentially dedicated to O-mannosylation of alpha-DAG1 and few other proteins but not of cadherins and protocaherins. This Mus musculus (Mouse) protein is Protein O-mannosyl-transferase 1 (Pomt1).